A 698-amino-acid chain; its full sequence is Protein CRAC (698 aa).

The PH domain occupies 22–122; sequence DVSYSSIMKK…FLTLLIARIR (101 aa). Positions 594–630 are disordered; it reads TGGGSVPSSQSTNNLQSSTSSMSSLSSSSTSTTKRSH. The segment covering 601–626 has biased composition (low complexity); sequence SSQSTNNLQSSTSSMSSLSSSSTSTT.

Its subcellular location is the cytoplasm. Its function is as follows. Couples activated G protein to adenylyl cyclase signal transduction from surface cAMP receptor. Pianissimo a cytosolic regulator and CRAC, are both essential for activation of the enzyme adenylyl cyclase. Pianissimo and CRAC do not function redundantly. Both proteins are integral components of the adenylyl cyclase activation pathway. This chain is Protein CRAC (dagA), found in Dictyostelium discoideum (Social amoeba).